The following is a 303-amino-acid chain: Probable cell division protein WhiA (303 aa).

A DNA-binding region (H-T-H motif) is located at residues 272–303 (SIQQVADALEFPITKSGVNHRLRKINKIADDL).

It belongs to the WhiA family.

Its function is as follows. Involved in cell division and chromosome segregation. The polypeptide is Probable cell division protein WhiA (Streptococcus pyogenes serotype M12 (strain MGAS2096)).